An 824-amino-acid polypeptide reads, in one-letter code: Putative beta-glucuronidase (824 aa).

A helical membrane pass occupies residues Y26 to Y43. The active-site Proton donor is the E430.

Belongs to the glycosyl hydrolase 2 family.

The protein localises to the membrane. It carries out the reaction a beta-D-glucuronoside + H2O = D-glucuronate + an alcohol. Glycoside hydrolase that may be involved in ulvan degradation. Ulvan is the main polysaccharide component of the Ulvales (green seaweed) cell wall. It is composed of disaccharide building blocks comprising 3-sulfated rhamnose (Rha3S) linked to D-glucuronic acid (GlcA), L-iduronic acid (IduA), or D-xylose (Xyl). The protein is Putative beta-glucuronidase of Formosa agariphila (strain DSM 15362 / KCTC 12365 / LMG 23005 / KMM 3901 / M-2Alg 35-1).